The sequence spans 488 residues: Glutamyl-tRNA(Gln) amidotransferase subunit A (488 aa).

Catalysis depends on charge relay system residues K77 and S152. Residue S176 is the Acyl-ester intermediate of the active site.

It belongs to the amidase family. GatA subfamily. Heterotrimer of A, B and C subunits.

It catalyses the reaction L-glutamyl-tRNA(Gln) + L-glutamine + ATP + H2O = L-glutaminyl-tRNA(Gln) + L-glutamate + ADP + phosphate + H(+). Allows the formation of correctly charged Gln-tRNA(Gln) through the transamidation of misacylated Glu-tRNA(Gln) in organisms which lack glutaminyl-tRNA synthetase. The reaction takes place in the presence of glutamine and ATP through an activated gamma-phospho-Glu-tRNA(Gln). The polypeptide is Glutamyl-tRNA(Gln) amidotransferase subunit A (Streptococcus uberis (strain ATCC BAA-854 / 0140J)).